Reading from the N-terminus, the 172-residue chain is Photosystem I assembly protein Ycf3 (172 aa).

TPR repeat units lie at residues 35-68, 72-105, and 120-153; these read AFSYYRNGMSAQAEGEYAEALQNYYEAMRLEVDA, SYILYNIGLIHTSNGEHGRALEYYYQALERNPSL, and GEQAIENGQSEISQILFEKAADYWKEAIRLAPTN.

It belongs to the Ycf3 family.

It localises to the plastid. The protein resides in the chloroplast thylakoid membrane. In terms of biological role, essential for the assembly of the photosystem I (PSI) complex. May act as a chaperone-like factor to guide the assembly of the PSI subunits. This is Photosystem I assembly protein Ycf3 from Chlamydomonas reinhardtii (Chlamydomonas smithii).